The sequence spans 227 residues: Transmembrane emp24 domain-containing protein 4 (227 aa).

The signal sequence occupies residues 1 to 29 (MAGVGVGPLQGMVRFGLLVLTVCAACARG). At 30–194 (LYFHIGETEK…RLTSESTNQR (165 aa)) the chain is on the lumenal side. Positions 39 to 137 (KRCFIEEIPD…KLRVHLDIQV (99 aa)) constitute a GOLD domain. Residue N117 is glycosylated (N-linked (GlcNAc...) asparagine). The stretch at 147 to 176 (IAAKDKLTELQLRARQLLDQVEQIQKEQDY) forms a coiled coil. A helical membrane pass occupies residues 195 to 212 (VLWWSIAQTVILILTGIW). Topologically, residues 213 to 227 (QMRHLKSFFEAKKLV) are cytoplasmic. Positions 220 to 221 (FF) match the COPII vesicle coat-binding motif. The COPI vesicle coat-binding motif lies at 220-227 (FFEAKKLV).

This sequence belongs to the EMP24/GP25L family.

The protein resides in the endoplasmic reticulum membrane. Its function is as follows. Involved in vesicular protein trafficking, mainly in the early secretory pathway. Involved in the maintenance of the Golgi apparatus. Appears to play a role in the biosynthesis of secreted cargo including processing. Involved in endoplasmic reticulum stress response. May play a role in the regulation of heat-shock response and apoptosis. The polypeptide is Transmembrane emp24 domain-containing protein 4 (Tmed4) (Mus musculus (Mouse)).